The chain runs to 218 residues: Dehydration-responsive element-binding protein 1B (218 aa).

The interval methionine 1–arginine 26 is disordered. Residues valine 32–alanine 95 constitute a DNA-binding region (AP2/ERF). Residues serine 131–asparagine 151 are disordered. A compositionally biased stretch (acidic residues) spans phenylalanine 141–asparagine 151.

The protein belongs to the AP2/ERF transcription factor family. ERF subfamily.

The protein localises to the nucleus. Functionally, transcriptional activator that binds specifically to the DNA sequence 5'-[AG]CCGAC-3'. Binding to the C-repeat/DRE element mediates high salinity- and dehydration-inducible transcription. Confers resistance to high salt, cold and drought stress. This Oryza sativa subsp. indica (Rice) protein is Dehydration-responsive element-binding protein 1B (DREB1B).